Consider the following 555-residue polypeptide: Dimethylaniline monooxygenase [N-oxide-forming] 4 (555 aa).

Residues 9–13 (GAGVS), Glu32, and 40–41 (LW) each bind FAD. Residues 60-61 (TN) and 195-198 (SGGD) contribute to the NADP(+) site. The helical transmembrane segment at 515–532 (YLKVWGAPLLLASVLLIC) threads the bilayer.

It belongs to the FMO family. Requires FAD as cofactor. Kidney and liver.

It is found in the microsome membrane. Its subcellular location is the endoplasmic reticulum membrane. The enzyme catalyses N,N-dimethylaniline + NADPH + O2 + H(+) = N,N-dimethylaniline N-oxide + NADP(+) + H2O. In terms of biological role, this protein is involved in the oxidative metabolism of a variety of xenobiotics such as drugs and pesticides. This Oryctolagus cuniculus (Rabbit) protein is Dimethylaniline monooxygenase [N-oxide-forming] 4 (FMO4).